A 386-amino-acid chain; its full sequence is Myosin light chain kinase family member 4 (386 aa).

Residue S100 is modified to Phosphoserine. Positions 107–361 (VSKSEILGGG…ASEALKHPWL (255 aa)) constitute a Protein kinase domain. ATP contacts are provided by residues 113–121 (LGGGRFGQV) and K136. The active-site Proton acceptor is D227.

The protein belongs to the protein kinase superfamily. CAMK Ser/Thr protein kinase family.

The enzyme catalyses L-seryl-[protein] + ATP = O-phospho-L-seryl-[protein] + ADP + H(+). The catalysed reaction is L-threonyl-[protein] + ATP = O-phospho-L-threonyl-[protein] + ADP + H(+). The polypeptide is Myosin light chain kinase family member 4 (Mylk4) (Mus musculus (Mouse)).